The primary structure comprises 101 residues: Small ribosomal subunit protein bS18c (101 aa).

This sequence belongs to the bacterial ribosomal protein bS18 family. In terms of assembly, component of the chloroplast small ribosomal subunit (SSU). Mature 70S chloroplast ribosomes of higher plants consist of a small (30S) and a large (50S) subunit. The 30S small subunit contains 1 molecule of ribosomal RNA (16S rRNA) and 24 different proteins. The 50S large subunit contains 3 rRNA molecules (23S, 5S and 4.5S rRNA) and 33 different proteins.

It is found in the plastid. The protein localises to the chloroplast. Its function is as follows. Component of the chloroplast ribosome (chloro-ribosome), a dedicated translation machinery responsible for the synthesis of chloroplast genome-encoded proteins, including proteins of the transcription and translation machinery and components of the photosynthetic apparatus. The sequence is that of Small ribosomal subunit protein bS18c (RPS18) from Spinacia oleracea (Spinach).